The following is a 1255-amino-acid chain: Kinesin-related protein 7 (1255 aa).

The tract at residues 1-26 (MESPVVEGNSGEVATPTLPQPPTPVS) is disordered. The Kinesin motor domain occupies 28–349 (NIRVVCRVRP…LQFGTRAKTI (322 aa)). 107–114 (GQTASGKT) contacts ATP. Composition is skewed to low complexity over residues 454–491 (NNNN…QQEN), 545–563 (NNNN…DSDG), and 583–603 (HNIN…NSNS). Disordered regions lie at residues 454–503 (NNNN…NSSF), 530–564 (GNIS…SDGY), 579–628 (DLND…MDVN), 661–686 (ENEQ…SNAT), 795–864 (EEGS…TKSI), and 915–934 (ISIK…TSIK). Residues 608 to 628 (VSTSYITSSPNLSPSKSMDVN) are compositionally biased toward polar residues. Residues 813 to 834 (GDDDDEENEDNENEDVIVDSDE) are compositionally biased toward acidic residues. The segment covering 915 to 932 (ISIKSNKEPSPSSSTTTS) has biased composition (low complexity). A helical membrane pass occupies residues 945-965 (IIFTIILTITLVSSSLLCLYL). Positions 1088-1223 (NYITKIDQLS…QELEDAPIAL (136 aa)) form a coiled coil.

It belongs to the TRAFAC class myosin-kinesin ATPase superfamily. Kinesin family.

It is found in the nucleus membrane. It localises to the cytoplasm. The protein resides in the cytoskeleton. In terms of biological role, microtubule-associated force-producing protein that plays a role in organelle transport. Its motor activity is directed toward the microtubule's plus end. May be involved in cell motility or cell differentiation during prestalk formation. In Dictyostelium discoideum (Social amoeba), this protein is Kinesin-related protein 7 (kif7).